A 326-amino-acid chain; its full sequence is Phospho-N-acetylmuramoyl-pentapeptide-transferase (326 aa).

A run of 10 helical transmembrane segments spans residues Ile-2–Phe-22, Val-51–Val-71, Leu-73–Ile-93, Ile-113–Glu-133, Gly-143–Ser-163, Gly-175–Thr-195, Met-199–Asn-219, Ile-225–Leu-245, Met-250–Ile-270, and Val-305–Leu-325.

This sequence belongs to the glycosyltransferase 4 family. MraY subfamily. Mg(2+) serves as cofactor.

The protein localises to the cell membrane. It carries out the reaction UDP-N-acetyl-alpha-D-muramoyl-L-alanyl-gamma-D-glutamyl-meso-2,6-diaminopimeloyl-D-alanyl-D-alanine + di-trans,octa-cis-undecaprenyl phosphate = di-trans,octa-cis-undecaprenyl diphospho-N-acetyl-alpha-D-muramoyl-L-alanyl-D-glutamyl-meso-2,6-diaminopimeloyl-D-alanyl-D-alanine + UMP. It participates in cell wall biogenesis; peptidoglycan biosynthesis. Catalyzes the initial step of the lipid cycle reactions in the biosynthesis of the cell wall peptidoglycan: transfers peptidoglycan precursor phospho-MurNAc-pentapeptide from UDP-MurNAc-pentapeptide onto the lipid carrier undecaprenyl phosphate, yielding undecaprenyl-pyrophosphoryl-MurNAc-pentapeptide, known as lipid I. In Wolbachia sp. subsp. Drosophila simulans (strain wRi), this protein is Phospho-N-acetylmuramoyl-pentapeptide-transferase.